A 384-amino-acid polypeptide reads, in one-letter code: S-adenosylmethionine synthase (384 aa).

Residue histidine 15 participates in ATP binding. Aspartate 17 contacts Mg(2+). Glutamate 43 lines the K(+) pocket. L-methionine-binding residues include glutamate 56 and glutamine 99. Residues 99-109 form a flexible loop region; it reads QSPDINQGVDR. ATP contacts are provided by residues 164-166, 230-231, aspartate 239, 245-246, alanine 262, and lysine 266; these read DAK, RF, and RK. Aspartate 239 is an L-methionine binding site. An L-methionine-binding site is contributed by lysine 270.

It belongs to the AdoMet synthase family. As to quaternary structure, homotetramer; dimer of dimers. Mg(2+) is required as a cofactor. Requires K(+) as cofactor.

It is found in the cytoplasm. The enzyme catalyses L-methionine + ATP + H2O = S-adenosyl-L-methionine + phosphate + diphosphate. The protein operates within amino-acid biosynthesis; S-adenosyl-L-methionine biosynthesis; S-adenosyl-L-methionine from L-methionine: step 1/1. Its function is as follows. Catalyzes the formation of S-adenosylmethionine (AdoMet) from methionine and ATP. The overall synthetic reaction is composed of two sequential steps, AdoMet formation and the subsequent tripolyphosphate hydrolysis which occurs prior to release of AdoMet from the enzyme. This is S-adenosylmethionine synthase from Salmonella heidelberg (strain SL476).